The sequence spans 211 residues: Claudin-7 (211 aa).

Residues 1 to 7 (MANSGLQ) lie on the Cytoplasmic side of the membrane. A helical membrane pass occupies residues 8 to 28 (LLGFSMAMLGWVGLIASTAIP). The Extracellular portion of the chain corresponds to 29–81 (QWQMSSYAGDNIITAQAMYKGLWMECVTQSTGMMSCKMYDSVLALPAATQATR). A helical transmembrane segment spans residues 82-102 (ALMIVSLVLGFLAMFVATMGM). Topologically, residues 103–119 (KCTRCGGDDKVKKARIA) are cytoplasmic. A helical transmembrane segment spans residues 120–140 (MTGGIIFIVAGLAALVACSWI). The Extracellular segment spans residues 141–160 (GHQIVTDFYNPLTPMNIKYE). The helical transmembrane segment at 161-181 (FGPAIFIGWAGSALVLLGGAL) threads the bilayer. The Cytoplasmic segment spans residues 182-211 (LSCSCPGSESKAAYRAPRSYPKSNSSKEYV). The segment at 210-211 (YV) is interactions with TJP1, TJP2 and TJP3.

This sequence belongs to the claudin family. As to quaternary structure, directly interacts with TJP1/ZO-1, TJP2/ZO-2 and TJP3/ZO-3. The phosphorylated form interacts with EPCAM. In terms of processing, phosphorylated.

It is found in the cell membrane. The protein localises to the basolateral cell membrane. It localises to the cell junction. Its subcellular location is the tight junction. Its function is as follows. Plays a major role in tight junction-specific obliteration of the intercellular space. This is Claudin-7 (Cldn7) from Rattus norvegicus (Rat).